Here is a 263-residue protein sequence, read N- to C-terminus: RNA exonuclease 4 (263 aa).

The disordered stretch occupies residues 1–27; the sequence is MRLSSNWSKLQDGVTKKAGKKRIDKKP. Positions 17–27 are enriched in basic residues; that stretch reads KAGKKRIDKKP. Positions 95 to 247 constitute an Exonuclease domain; the sequence is YIAMDCEFVG…EDARATMLIY (153 aa).

Belongs to the REXO4 family.

It localises to the nucleus. In terms of biological role, exoribonuclease involved in ribosome biosynthesis. Involved in the processing of ITS1, the internal transcribed spacer localized between the 18S and 5.8S rRNAs. The protein is RNA exonuclease 4 (REX4) of Candida glabrata (strain ATCC 2001 / BCRC 20586 / JCM 3761 / NBRC 0622 / NRRL Y-65 / CBS 138) (Yeast).